Here is a 1451-residue protein sequence, read N- to C-terminus: DNA excision repair protein ERCC-6-like (1451 aa).

A TPR 1 repeat occupies 27 to 60 (YDRYRQKGKEAALNGELPRALELFQLAYQLQPSE). Residues 118 to 286 (SLYRDGRKGG…WALFDFACQG (169 aa)) enclose the Helicase ATP-binding domain. 131-138 (DDMGLGKT) is a binding site for ATP. Positions 237-240 (DEAH) match the DEAH box motif. Positions 479-639 (FVVSLMECLR…PFRYFSKQEL (161 aa)) constitute a Helicase C-terminal domain. 7 disordered regions span residues 647-669 (DTRS…RSDT), 778-804 (NSFD…ETAS), 935-1006 (DDTS…ATTD), 1035-1054 (DEEV…EFQL), 1063-1083 (LEEP…NYND), 1096-1140 (RSTP…LTSS), and 1182-1343 (LLEN…SAEL). A compositionally biased stretch (acidic residues) spans 781 to 804 (DEPEFEEDEQNLPSAEDAEMETAS). Composition is skewed to polar residues over residues 944 to 964 (SDFN…SPSL) and 992 to 1002 (QVLSSPLSQHE). Residue serine 961 is modified to Phosphoserine. Acidic residues predominate over residues 1035 to 1050 (DEEVHEVEESAAEESP). Over residues 1063–1074 (LEEPSINHDKQN) the composition is skewed to basic and acidic residues. Acidic residues predominate over residues 1121–1132 (DTEEEEEEEEES). Residues 1213 to 1230 (VQTSSGDNSKSYETSEAN) show a composition bias toward polar residues. Over residues 1244–1278 (YREGKNTSDKVSESNETHSEEFAEEEKPSGDKSES) the composition is skewed to basic and acidic residues. Residues 1310 to 1341 (SEADESVVEEEEPSGETLNTEESEMGEEEESA) show a composition bias toward acidic residues. Residues 1402 to 1435 (YNLLVLSGKQSLAEGRKQEALDFFLKAIDINTGD) form a TPR 2 repeat.

It belongs to the SNF2/RAD54 helicase family.

Its subcellular location is the chromosome. The protein localises to the centromere. It is found in the kinetochore. The enzyme catalyses ATP + H2O = ADP + phosphate + H(+). Its function is as follows. DNA helicase that acts as a tension sensor that associates with catenated DNA which is stretched under tension until it is resolved during anaphase. Functions as ATP-dependent DNA translocase. Can promote Holliday junction branch migration (in vitro). This chain is DNA excision repair protein ERCC-6-like (ercc6l), found in Danio rerio (Zebrafish).